A 279-amino-acid polypeptide reads, in one-letter code: Pleckstrin homology domain-containing family F member 1 (279 aa).

Residues 35-131 enclose the PH domain; sequence VLLGEGVLTK…WISHIEECVR (97 aa). The segment at 152 to 212 adopts an FYVE-type zinc-finger fold; the sequence is DKATDICMRC…VCSLCYRELA (61 aa). The Zn(2+) site is built by C158, C161, C175, C178, C183, C186, C204, and C207. The segment at 218-264 is disordered; that stretch reads EEAEEQGAGSPGQPAHLARPICGASSGDDDDSDEDKEGSRDGDWPSS. The span at 244–253 shows a compositional bias: acidic residues; the sequence is GDDDDSDEDK.

Highly expressed in heart and skeletal muscle. Weakly expressed in brain, thymus, spleen, kidney, liver, small intestine, placenta and lung.

The protein resides in the nucleus. The protein localises to the cytoplasm. It is found in the perinuclear region. It localises to the lysosome. May induce apoptosis through the lysosomal-mitochondrial pathway. Translocates to the lysosome initiating the permeabilization of lysosomal membrane (LMP) and resulting in the release of CTSD and CTSL to the cytoplasm. Triggers the caspase-independent apoptosis by altering mitochondrial membrane permeabilization (MMP) resulting in the release of PDCD8. The sequence is that of Pleckstrin homology domain-containing family F member 1 (PLEKHF1) from Homo sapiens (Human).